We begin with the raw amino-acid sequence, 493 residues long: Cytochrome P450 2A9 (493 aa).

Residue cysteine 438 coordinates heme.

It belongs to the cytochrome P450 family. Heme is required as a cofactor. As to expression, liver.

Its subcellular location is the endoplasmic reticulum membrane. It is found in the microsome membrane. It carries out the reaction an organic molecule + reduced [NADPH--hemoprotein reductase] + O2 = an alcohol + oxidized [NADPH--hemoprotein reductase] + H2O + H(+). Functionally, cytochromes P450 are a group of heme-thiolate monooxygenases. In liver microsomes, this enzyme is involved in an NADPH-dependent electron transport pathway. It oxidizes a variety of structurally unrelated compounds, including steroids, fatty acids, and xenobiotics. This Mesocricetus auratus (Golden hamster) protein is Cytochrome P450 2A9 (CYP2A9).